A 487-amino-acid polypeptide reads, in one-letter code: Protein Optix (487 aa).

A DNA-binding region (homeobox) is located at residues 154–214; sequence WDGEQKTHCF…KNRRQRDRAA (61 aa). Disordered stretches follow at residues 182–330 and 443–463; these read NPTK…GAGP and ASVG…GYHH. Over residues 255-277 the composition is skewed to polar residues; the sequence is GTHSPVPSSLQLQHSPGSTSNGA. Positions 278 to 293 are enriched in basic and acidic residues; that stretch reads NDREESLSVDDDKPRD. Positions 294 to 312 are enriched in low complexity; that stretch reads LSGSLPLPLSLPLPLASPT. A compositionally biased stretch (gly residues) spans 321–330; it reads GYGGGAGAGP.

The protein belongs to the SIX/Sine oculis homeobox family. In terms of tissue distribution, expressed during early development of the head. First expressed in a band around the anterior end of stage 5 blastoderm embryo, at 93% to 85% egg length. By gastrula stage, site of expression shifts to the dorsal-anterior region. At stage 12, expression is found in the clypeolabrum, the stomodaeum, and in ectoderm dorsal to the future supraesophageal ganglion.

The protein resides in the nucleus. Functionally, may be involved in head or eye development; development of the clypeolabrum and several head sensory organs. This Drosophila melanogaster (Fruit fly) protein is Protein Optix (Optix).